The chain runs to 103 residues: Salivary thrombin inhibitor anophelin (103 aa).

Residues 1-21 (MASKLFVLAFLCLALVVVVQS) form the signal peptide. A disordered region spans residues 24–103 (QYARGDVPTY…PAASSSESDE (80 aa)). The tract at residues 56–68 (EEFDPSLLEEHAD) is blocks exosite I of host thrombin. The blocks active site cleft of host thrombin in a reverse direction compared to substrates stretch occupies residues 74–77 (DPGR). The segment covering 91–103 (ASAPAASSSESDE) has biased composition (low complexity).

This sequence belongs to the anophelin family. As to quaternary structure, interacts with human F2 (thrombin); the interaction results in thrombin inhibition. In terms of tissue distribution, female salivary gland (at protein level). Not detected in female midgut, head, carcass and male tissues (at protein level).

It localises to the secreted. Increasing concentration of NaCl decreases affinity for thrombin. Functionally, salivary protein with anticoagulant activity that inhibits host thrombin (F2); binds to the proteinase in a reverse orientation (opposite to substrates). This chain is Salivary thrombin inhibitor anophelin, found in Anopheles gambiae (African malaria mosquito).